A 376-amino-acid chain; its full sequence is Bifunctional enzyme IspD/IspF (376 aa).

Residues 1 to 220 (MRIAAILVAG…RSMSISMIPR (220 aa)) are 2-C-methyl-D-erythritol 4-phosphate cytidylyltransferase. The interval 220–376 (RIGTGYDVHA…QAAVIIMIPA (157 aa)) is 2-C-methyl-D-erythritol 2,4-cyclodiphosphate synthase. Residues D226 and H228 each contribute to the a divalent metal cation site. 4-CDP-2-C-methyl-D-erythritol 2-phosphate contacts are provided by residues 226–228 (DVH) and 252–253 (HS). Residue H260 coordinates a divalent metal cation. 4-CDP-2-C-methyl-D-erythritol 2-phosphate-binding positions include 274–276 (DIG), 350–353 (TTSE), F357, and R360.

This sequence in the N-terminal section; belongs to the IspD/TarI cytidylyltransferase family. IspD subfamily. The protein in the C-terminal section; belongs to the IspF family. A divalent metal cation serves as cofactor.

The catalysed reaction is 2-C-methyl-D-erythritol 4-phosphate + CTP + H(+) = 4-CDP-2-C-methyl-D-erythritol + diphosphate. It carries out the reaction 4-CDP-2-C-methyl-D-erythritol 2-phosphate = 2-C-methyl-D-erythritol 2,4-cyclic diphosphate + CMP. It functions in the pathway isoprenoid biosynthesis; isopentenyl diphosphate biosynthesis via DXP pathway; isopentenyl diphosphate from 1-deoxy-D-xylulose 5-phosphate: step 2/6. Its pathway is isoprenoid biosynthesis; isopentenyl diphosphate biosynthesis via DXP pathway; isopentenyl diphosphate from 1-deoxy-D-xylulose 5-phosphate: step 4/6. Functionally, bifunctional enzyme that catalyzes the formation of 4-diphosphocytidyl-2-C-methyl-D-erythritol from CTP and 2-C-methyl-D-erythritol 4-phosphate (MEP) (IspD), and catalyzes the conversion of 4-diphosphocytidyl-2-C-methyl-D-erythritol 2-phosphate (CDP-ME2P) to 2-C-methyl-D-erythritol 2,4-cyclodiphosphate (ME-CPP) with a corresponding release of cytidine 5-monophosphate (CMP) (IspF). The protein is Bifunctional enzyme IspD/IspF of Granulibacter bethesdensis (strain ATCC BAA-1260 / CGDNIH1).